Reading from the N-terminus, the 344-residue chain is Cycloartenol-C-24-methyltransferase 1 (344 aa).

This sequence belongs to the class I-like SAM-binding methyltransferase superfamily. Erg6/SMT family.

The catalysed reaction is zymosterol + S-adenosyl-L-methionine = fecosterol + S-adenosyl-L-homocysteine + H(+). It participates in steroid biosynthesis; sterol biosynthesis. Catalyzes the methyl transfer from S-adenosyl-methionine to the C-24 of cycloartenol to form 24-methylene cycloartenol. The polypeptide is Cycloartenol-C-24-methyltransferase 1 (Smt1-1) (Oryza sativa subsp. japonica (Rice)).